Consider the following 420-residue polypeptide: Probable glycosyltransferase YdaM (420 aa).

Transmembrane regions (helical) follow at residues 4–24 (TLFF…MFLM), 299–319 (IIFD…GVIM), 332–352 (LHLS…FLFM), and 371–391 (FFIV…LVIY).

It belongs to the glycosyltransferase 2 family.

The protein localises to the cell membrane. The chain is Probable glycosyltransferase YdaM (ydaM) from Bacillus subtilis (strain 168).